A 555-amino-acid chain; its full sequence is Glutamine--tRNA ligase (555 aa).

Residues Pro-35–His-45 carry the 'HIGH' region motif. ATP-binding positions include Glu-36–Asn-38 and His-42–Ser-48. The L-glutamine site is built by Asp-68 and Tyr-213. ATP contacts are provided by residues Thr-232, Arg-262–Leu-263, and Met-270–Lys-272. Positions Val-269–Arg-273 match the 'KMSKS' region motif.

This sequence belongs to the class-I aminoacyl-tRNA synthetase family. Monomer.

It is found in the cytoplasm. The catalysed reaction is tRNA(Gln) + L-glutamine + ATP = L-glutaminyl-tRNA(Gln) + AMP + diphosphate. The polypeptide is Glutamine--tRNA ligase (Photobacterium profundum (strain SS9)).